A 398-amino-acid polypeptide reads, in one-letter code: Acetate kinase 1 (398 aa).

Asparagine 9 contacts Mg(2+). Lysine 16 lines the ATP pocket. Arginine 89 lines the substrate pocket. The active-site Proton donor/acceptor is aspartate 146. ATP-binding positions include 206-210, 281-283, and 329-333; these read HLGNG, DCR, and GIGEN. Position 384 (glutamate 384) interacts with Mg(2+).

The protein belongs to the acetokinase family. In terms of assembly, homodimer. Mg(2+) is required as a cofactor. The cofactor is Mn(2+).

It is found in the cytoplasm. The catalysed reaction is acetate + ATP = acetyl phosphate + ADP. The protein operates within metabolic intermediate biosynthesis; acetyl-CoA biosynthesis; acetyl-CoA from acetate: step 1/2. Its function is as follows. Catalyzes the formation of acetyl phosphate from acetate and ATP. Can also catalyze the reverse reaction. The chain is Acetate kinase 1 from Vibrio cholerae serotype O1 (strain ATCC 39315 / El Tor Inaba N16961).